A 111-amino-acid chain; its full sequence is Nucleoid-associated protein TTE0040 (111 aa).

This sequence belongs to the YbaB/EbfC family. Homodimer.

Its subcellular location is the cytoplasm. The protein localises to the nucleoid. Its function is as follows. Binds to DNA and alters its conformation. May be involved in regulation of gene expression, nucleoid organization and DNA protection. The polypeptide is Nucleoid-associated protein TTE0040 (Caldanaerobacter subterraneus subsp. tengcongensis (strain DSM 15242 / JCM 11007 / NBRC 100824 / MB4) (Thermoanaerobacter tengcongensis)).